Here is a 259-residue protein sequence, read N- to C-terminus: Apolipoprotein A-I (259 aa).

Positions 1–18 (MKAAVLAVALVFLTGCQA) are cleaved as a signal peptide. 2 repeat units span residues 67–88 (LNLL…EQLG) and 89–110 (PVTQ…NEMN). A 10 X approximate tandem repeats region spans residues 67–259 (LNLLDNWDTL…IDEAKKKLNA (193 aa)). Methionine sulfoxide is present on Met109. The stretch at 111–121 (KDLENVKQKMQ) is one 3; half-length repeat. Residues 122–143 (PHLDEFQEKWNEEVEAYRQKLE) form repeat 4. Residues 144 to 161 (PLGTELHKNAKEMQRHLK) form a 5; truncated repeat. Repeat unit 6 spans residues 162 to 183 (VVAEEFRDRMRVNADALRAKFG). Residues 184 to 203 (LYSDQMRENLAQRLTEIKNH) form a 7; truncated repeat. Methionine sulfoxide is present on Met189. Copy 8 of the repeat occupies 204–225 (PTLIEYHTKASDHLKTLGEKAK). The stretch at 226 to 236 (PALDDLGQGLM) is one 9; half-length repeat. Met236 bears the Methionine sulfoxide mark. Repeat 10 spans residues 237 to 259 (PVLEAWKAKIMSMIDEAKKKLNA).

This sequence belongs to the apolipoprotein A1/A4/E family. Homodimer. Interacts with APOA1BP and CLU. Component of a sperm activating protein complex (SPAP), consisting of APOA1, an immunoglobulin heavy chain, an immunoglobulin light chain and albumin. Interacts with NDRG1. Interacts with SCGB3A2. Interacts with NAXE and YJEFN3. In terms of processing, glycosylated. Post-translationally, palmitoylated. Phosphorylation sites are present in the extracellular medium. As to expression, major protein of plasma HDL, also found in chylomicrons.

It localises to the secreted. Participates in the reverse transport of cholesterol from tissues to the liver for excretion by promoting cholesterol efflux from tissues and by acting as a cofactor for the lecithin cholesterol acyltransferase (LCAT). As part of the SPAP complex, activates spermatozoa motility. This is Apolipoprotein A-I (Apoa1) from Rattus norvegicus (Rat).